Reading from the N-terminus, the 140-residue chain is Mialostatin (140 aa).

The first 18 residues, 1-18 (MAFFKSAVFLVCVVLAAA), serve as a signal peptide directing secretion. 2 disulfides stabilise this stretch: Cys90/Cys103 and Cys114/Cys134.

It belongs to the cystatin family. In terms of tissue distribution, expressed in midgut (at protein level).

The protein localises to the secreted. In terms of biological role, inhibitor of cysteine proteinases. Inhibits several endogenous midgut digestive cysteine proteases, such as cathepsin L1, L3, B and C, but not aspartic protease cathepsin D1 and cysteine protease legumain. Inhibits proteolysis of blood proteins catalyzed by tick gut cysteine cathepsins. Inhibits host cathepsin B (CSTB), C (CTSC), H (CTSH), K (CTSK), L (CTSL) and S (CTSS). The chain is Mialostatin from Ixodes ricinus (Common tick).